The chain runs to 424 residues: D-inositol 3-phosphate glycosyltransferase (424 aa).

A 1D-myo-inositol 3-phosphate-binding site is contributed by histidine 21. UDP-N-acetyl-alpha-D-glucosamine is bound by residues 27–28 (QP) and glycine 35. 1D-myo-inositol 3-phosphate is bound by residues 32–37 (DAGGMN), lysine 90, tyrosine 123, threonine 147, and arginine 167. Arginine 241, lysine 246, and glutamine 299 together coordinate UDP-N-acetyl-alpha-D-glucosamine. Mg(2+)-binding residues include phenylalanine 308, glutamine 309, and alanine 311. Residues glutamate 321 and glutamate 329 each coordinate UDP-N-acetyl-alpha-D-glucosamine. Threonine 335 serves as a coordination point for Mg(2+).

This sequence belongs to the glycosyltransferase group 1 family. MshA subfamily. In terms of assembly, homodimer.

It carries out the reaction 1D-myo-inositol 3-phosphate + UDP-N-acetyl-alpha-D-glucosamine = 1D-myo-inositol 2-acetamido-2-deoxy-alpha-D-glucopyranoside 3-phosphate + UDP + H(+). Its function is as follows. Catalyzes the transfer of a N-acetyl-glucosamine moiety to 1D-myo-inositol 3-phosphate to produce 1D-myo-inositol 2-acetamido-2-deoxy-glucopyranoside 3-phosphate in the mycothiol biosynthesis pathway. The chain is D-inositol 3-phosphate glycosyltransferase from Mycobacterium avium (strain 104).